The chain runs to 146 residues: Gastrin-releasing peptide (146 aa).

A signal peptide spans 1-23 (MRGREFPLVLLALVLCQAPRGPA). At M50 the chain carries Methionine amide. The propeptide occupies 54–146 (STGESPYAYE…QHEGRIPQLN (93 aa)). Residues 95 to 146 (SHQPPQWEPLGIRQSTWDSKDGSNFKDMGPRLKVDGLSAPGSQHEGRIPQLN) form a disordered region. Basic and acidic residues predominate over residues 112–128 (DSKDGSNFKDMGPRLKV).

It belongs to the bombesin/neuromedin-B/ranatensin family.

The protein localises to the secreted. It localises to the cytoplasmic vesicle. Its subcellular location is the secretory vesicle lumen. It is found in the cell projection. The protein resides in the neuron projection. Its function is as follows. Stimulates the release of gastrin and other gastrointestinal hormones. Contributes to the perception of prurient stimuli and to the transmission of itch signals in the spinal cord that promote scratching behavior. Contributes primarily to nonhistaminergic itch sensation. In one study, shown to act in the amygdala as part of an inhibitory network which inhibits memory specifically related to learned fear. In another study, shown to act on vasoactive intestinal peptide (VIP)-expressing cells in the auditory cortex, most likely via extrasynaptic diffusion from local and long-range sources, to mediate disinhibition of glutamatergic cells via VIP cell-specific GRPR signaling which leads to enhanced auditory fear memories. Contributes to the regulation of food intake. Inhibits voltage-gated sodium channels but enhances voltage-gated potassium channels in hippocampal neurons. Induces sighing by acting directly on the pre-Botzinger complex, a cluster of several thousand neurons in the ventrolateral medulla responsible for inspiration during respiratory activity. Functionally, induces an itch response through activation of receptors present on mast cells, triggering mast cell degranulation. This chain is Gastrin-releasing peptide (GRP), found in Sus scrofa (Pig).